The primary structure comprises 405 residues: Caspase-1 (405 aa).

The region spanning Met1–Ser91 is the CARD domain. Residues Met1–Asp119 constitute a propeptide that is removed on maturation. Catalysis depends on residues His238 and Cys286. Positions Ser299–Asp317 are excised as a propeptide. Residue Ser303 is modified to Phosphoserine.

Belongs to the peptidase C14A family. In terms of assembly, heterotetramer that consists of two anti-parallel arranged heterodimers, each one formed by a 20 kDa (Caspase-1 subunit p20) and a 10 kDa (Caspase-1 subunit p10) subunit. May be a component of the inflammasome, a protein complex which also includes PYCARD, CARD8 and NLRP2 and whose function would be the activation of pro-inflammatory caspases. Component of the AIM2 PANoptosome complex, a multiprotein complex that drives inflammatory cell death (PANoptosis). Both the p10 and p20 subunits interact with MEFV. Interacts with CARD17P/INCA and CARD18. Interacts with SERPINB1; this interaction regulates CASP1 activity. As to quaternary structure, heterotetramer that consists of two anti-parallel arranged heterodimers, each one formed by a 20 kDa (Caspase-1 subunit p20) and a 10 kDa (Caspase-1 subunit p10) subunit. The two subunits are derived from the precursor sequence by an autocatalytic mechanism. In terms of processing, ubiquitinated via 'Lys-11'-linked polyubiquitination. Deubiquitinated by USP8.

It localises to the cytoplasm. It is found in the cell membrane. It catalyses the reaction Strict requirement for an Asp residue at position P1 and has a preferred cleavage sequence of Tyr-Val-Ala-Asp-|-.. Functionally, thiol protease involved in a variety of inflammatory processes by proteolytically cleaving other proteins, such as the precursors of the inflammatory cytokines interleukin-1 beta (IL1B) and interleukin 18 (IL18) as well as the pyroptosis inducer Gasdermin-D (GSDMD), into active mature peptides. Plays a key role in cell immunity as an inflammatory response initiator: once activated through formation of an inflammasome complex, it initiates a pro-inflammatory response through the cleavage of the two inflammatory cytokines IL1B and IL18, releasing the mature cytokines which are involved in a variety of inflammatory processes. Cleaves a tetrapeptide after an Asp residue at position P1. Also initiates pyroptosis, a programmed lytic cell death pathway, through cleavage of GSDMD. In contrast to cleavage of interleukin IL1B, recognition and cleavage of GSDMD is not strictly dependent on the consensus cleavage site but depends on an exosite interface on CASP1 that recognizes and binds the Gasdermin-D, C-terminal (GSDMD-CT) part. Cleaves and activates CASP7 in response to bacterial infection, promoting plasma membrane repair. Upon inflammasome activation, during DNA virus infection but not RNA virus challenge, controls antiviral immunity through the cleavage of CGAS, rendering it inactive. In apoptotic cells, cleaves SPHK2 which is released from cells and remains enzymatically active extracellularly. The sequence is that of Caspase-1 (CASP1) from Equus caballus (Horse).